The following is a 464-amino-acid chain: Phospho-cellobiase (464 aa).

Glu172 functions as the Proton donor in the catalytic mechanism. Glu361 acts as the Nucleophile in catalysis.

The protein belongs to the glycosyl hydrolase 1 family.

The sequence is that of Phospho-cellobiase (casB) from Klebsiella oxytoca.